The following is a 439-amino-acid chain: GTPase Der (439 aa).

EngA-type G domains lie at 4–168 and 177–352; these read PIVA…KDDE and INIA…DNYN. Residues 10 to 17, 57 to 61, 120 to 123, 183 to 190, 230 to 234, and 295 to 298 each bind GTP; these read GRPNVGKS, DTGGI, NKID, GKPNVGKS, DTAGL, and NKWD. The KH-like domain occupies 353 to 437; that stretch reads KRVKTGVLND…GIKSEFRERK (85 aa).

Belongs to the TRAFAC class TrmE-Era-EngA-EngB-Septin-like GTPase superfamily. EngA (Der) GTPase family. Associates with the 50S ribosomal subunit.

Its function is as follows. GTPase that plays an essential role in the late steps of ribosome biogenesis. This Clostridium botulinum (strain ATCC 19397 / Type A) protein is GTPase Der.